The following is a 99-amino-acid chain: Virion membrane protein OPG135 (99 aa).

The signal sequence occupies residues 1-22 (MSCYTAILKSVGGLALFQVANG). At 23–45 (AIDLCRHFFMYFCEQKLRPNSFW) the chain is on the intravirion side. Residues 46–66 (FVVVRAIASMIMYLVLGIALL) traverse the membrane as a helical segment. The Virion surface segment spans residues 67–83 (YISEQDDKKNTNNDGSN). The span at 73–89 (DKKNTNNDGSNNDKRNE) shows a compositional bias: basic and acidic residues. The disordered stretch occupies residues 73–99 (DKKNTNNDGSNNDKRNESSINSNSSPK). Asn88 carries an N-linked (GlcNAc...) asparagine; by host glycan. Residues 90-99 (SSINSNSSPK) show a composition bias toward polar residues.

This sequence belongs to the oerthopoxvirus OPG135 family.

Its subcellular location is the virion membrane. It localises to the host cytoplasm. Envelope protein. Required for an early step in virion morphogenesis. The sequence is that of Virion membrane protein OPG135 (OPG135) from Homo sapiens (Human).